The chain runs to 27 residues: Caerulein precursor fragment R1 (27 aa).

As to expression, expressed by the skin glands.

It is found in the secreted. Its function is as follows. Antimicrobial peptide. The sequence is that of Caerulein precursor fragment R1 from Xenopus ruwenzoriensis (Uganda clawed frog).